A 220-amino-acid polypeptide reads, in one-letter code: NADH-quinone oxidoreductase subunit I (220 aa).

2 4Fe-4S ferredoxin-type domains span residues 71-102 and 112-141; these read LQRL…IITH and DSYT…MGNR. Residues C82, C85, C88, C92, C121, C124, C127, and C131 each coordinate [4Fe-4S] cluster. The interval 187-220 is disordered; that stretch reads MQATPLDYVQEPSKEESKEETPTNPESNKGDENV. Residues 198–207 show a composition bias toward basic and acidic residues; that stretch reads PSKEESKEET.

It belongs to the complex I 23 kDa subunit family. As to quaternary structure, NDH-1 is composed of 14 different subunits. Subunits NuoA, H, J, K, L, M, N constitute the membrane sector of the complex. The cofactor is [4Fe-4S] cluster.

It localises to the cell inner membrane. It catalyses the reaction a quinone + NADH + 5 H(+)(in) = a quinol + NAD(+) + 4 H(+)(out). Its function is as follows. NDH-1 shuttles electrons from NADH, via FMN and iron-sulfur (Fe-S) centers, to quinones in the respiratory chain. The immediate electron acceptor for the enzyme in this species is believed to be ubiquinone. Couples the redox reaction to proton translocation (for every two electrons transferred, four hydrogen ions are translocated across the cytoplasmic membrane), and thus conserves the redox energy in a proton gradient. In Helicobacter pylori (strain Shi470), this protein is NADH-quinone oxidoreductase subunit I.